A 434-amino-acid chain; its full sequence is Methylenetetrahydrofolate--tRNA-(uracil-5-)-methyltransferase TrmFO (434 aa).

10–15 (GAGLAG) is an FAD binding site.

Belongs to the MnmG family. TrmFO subfamily. Requires FAD as cofactor.

It localises to the cytoplasm. It carries out the reaction uridine(54) in tRNA + (6R)-5,10-methylene-5,6,7,8-tetrahydrofolate + NADH + H(+) = 5-methyluridine(54) in tRNA + (6S)-5,6,7,8-tetrahydrofolate + NAD(+). It catalyses the reaction uridine(54) in tRNA + (6R)-5,10-methylene-5,6,7,8-tetrahydrofolate + NADPH + H(+) = 5-methyluridine(54) in tRNA + (6S)-5,6,7,8-tetrahydrofolate + NADP(+). In terms of biological role, catalyzes the folate-dependent formation of 5-methyl-uridine at position 54 (M-5-U54) in all tRNAs. This Bacillus cereus (strain Q1) protein is Methylenetetrahydrofolate--tRNA-(uracil-5-)-methyltransferase TrmFO.